A 254-amino-acid polypeptide reads, in one-letter code: 4-hydroxy-tetrahydrodipicolinate reductase (254 aa).

An NAD(+)-binding site is contributed by 13–18 (GAAGRM). NADP(+) is bound at residue Arg39. Residues 86–88 (GTT) and 110–113 (AANT) contribute to the NAD(+) site. Catalysis depends on His143, which acts as the Proton donor/acceptor. His144 contributes to the (S)-2,3,4,5-tetrahydrodipicolinate binding site. The active-site Proton donor is the Lys147. 153-154 (GT) lines the (S)-2,3,4,5-tetrahydrodipicolinate pocket.

The protein belongs to the DapB family.

It is found in the cytoplasm. It carries out the reaction (S)-2,3,4,5-tetrahydrodipicolinate + NAD(+) + H2O = (2S,4S)-4-hydroxy-2,3,4,5-tetrahydrodipicolinate + NADH + H(+). The enzyme catalyses (S)-2,3,4,5-tetrahydrodipicolinate + NADP(+) + H2O = (2S,4S)-4-hydroxy-2,3,4,5-tetrahydrodipicolinate + NADPH + H(+). The protein operates within amino-acid biosynthesis; L-lysine biosynthesis via DAP pathway; (S)-tetrahydrodipicolinate from L-aspartate: step 4/4. Catalyzes the conversion of 4-hydroxy-tetrahydrodipicolinate (HTPA) to tetrahydrodipicolinate. The chain is 4-hydroxy-tetrahydrodipicolinate reductase from Zymomonas mobilis subsp. mobilis (strain ATCC 31821 / ZM4 / CP4).